The sequence spans 204 residues: Inactive ribonuclease-like protein 9 (204 aa).

Positions 1–26 are cleaved as a signal peptide; it reads MMRTPITTHPLLLLLLLQQLLQPVQF. 3 disulfides stabilise this stretch: Cys97-Cys152, Cys115-Cys167, and Cys122-Cys129. N-linked (GlcNAc...) asparagine glycosylation is found at Asn130 and Asn142.

This sequence belongs to the pancreatic ribonuclease family.

It localises to the secreted. In terms of biological role, does not exhibit any ribonuclease activity. The sequence is that of Inactive ribonuclease-like protein 9 (RNASE9) from Macaca nemestrina (Pig-tailed macaque).